The chain runs to 354 residues: tRNA N6-adenosine threonylcarbamoyltransferase (354 aa).

2 residues coordinate Fe cation: His115 and His119. Substrate-binding positions include 138 to 142, Asp171, Gly184, and Asn276; that span reads LVSGG. Asp304 lines the Fe cation pocket.

Belongs to the KAE1 / TsaD family. Fe(2+) serves as cofactor.

Its subcellular location is the cytoplasm. The enzyme catalyses L-threonylcarbamoyladenylate + adenosine(37) in tRNA = N(6)-L-threonylcarbamoyladenosine(37) in tRNA + AMP + H(+). Functionally, required for the formation of a threonylcarbamoyl group on adenosine at position 37 (t(6)A37) in tRNAs that read codons beginning with adenine. Is involved in the transfer of the threonylcarbamoyl moiety of threonylcarbamoyl-AMP (TC-AMP) to the N6 group of A37, together with TsaE and TsaB. TsaD likely plays a direct catalytic role in this reaction. This chain is tRNA N6-adenosine threonylcarbamoyltransferase, found in Xanthomonas campestris pv. campestris (strain 8004).